A 414-amino-acid polypeptide reads, in one-letter code: Tryptophan synthase beta chain (414 aa).

Lys-105 is modified (N6-(pyridoxal phosphate)lysine).

Belongs to the TrpB family. Tetramer of two alpha and two beta chains. Requires pyridoxal 5'-phosphate as cofactor.

It catalyses the reaction (1S,2R)-1-C-(indol-3-yl)glycerol 3-phosphate + L-serine = D-glyceraldehyde 3-phosphate + L-tryptophan + H2O. It participates in amino-acid biosynthesis; L-tryptophan biosynthesis; L-tryptophan from chorismate: step 5/5. The beta subunit is responsible for the synthesis of L-tryptophan from indole and L-serine. This is Tryptophan synthase beta chain from Gloeobacter violaceus (strain ATCC 29082 / PCC 7421).